The following is a 380-amino-acid chain: Glucose-1-phosphate adenylyltransferase (380 aa).

Residues Gly164, 179–180 (EK), and Ser190 contribute to the alpha-D-glucose 1-phosphate site.

It belongs to the bacterial/plant glucose-1-phosphate adenylyltransferase family. In terms of assembly, homotetramer.

The enzyme catalyses alpha-D-glucose 1-phosphate + ATP + H(+) = ADP-alpha-D-glucose + diphosphate. The protein operates within glycan biosynthesis; glycogen biosynthesis. Its function is as follows. Involved in the biosynthesis of ADP-glucose, a building block required for the elongation reactions to produce glycogen. Catalyzes the reaction between ATP and alpha-D-glucose 1-phosphate (G1P) to produce pyrophosphate and ADP-Glc. The polypeptide is Glucose-1-phosphate adenylyltransferase (Streptococcus pneumoniae (strain 70585)).